A 28-amino-acid polypeptide reads, in one-letter code: Arylalkyl acylamidase (28 aa).

In terms of assembly, homotetramer.

The catalysed reaction is an N-acetylarylalkylamine + H2O = an aralkylamine + acetate. With respect to regulation, activated by divalent metal ions. Inhibited by certain thiol reagents. Shows a strict specificity for N-acetyl arylalkylamines but not acetanilide derivatives. The sequence is that of Arylalkyl acylamidase from Pseudomonas putida (Arthrobacter siderocapsulatus).